The primary structure comprises 312 residues: CD-NTase-associated protein 12 (312 aa).

The TIR domain occupies 5 to 127 (RLFIGSSSEE…FNGLTLARFD (123 aa)).

This sequence in the C-terminal section; belongs to the bacterial STING family. Forms homodimers; in the presence of c-di-GMP forms filaments with an ordered array of parallel-stacked subunits.

It carries out the reaction NAD(+) + H2O = ADP-D-ribose + nicotinamide + H(+). NAD(+) hydrolase activity is strongly stimulated by c-di-GMP, weakly by 3'3'-cGAMP, very weakly by c-di-AMP but not at all by 2'3'-cGAMP. Self-association of TIR domains is required for NADase activity. Its function is as follows. Effector protein of a CBASS antiviral system with NAD(+) hydrolase activity. CBASS (cyclic oligonucleotide-based antiphage signaling system) provides immunity against bacteriophage. The CD-NTase protein synthesizes cyclic nucleotides in response to infection; these serve as specific second messenger signals. The signals activate a diverse range of effectors, leading to bacterial cell death and thus abortive phage infection. A type I-D CBASS(GG) system. In terms of biological role, binds c-di-GMP, does not bind cUMP-AMP. Upon activation by c-di-GMP forms filaments which hydrolyze NAD(+); filament formation is required for enzyme activation. The chain is CD-NTase-associated protein 12 from Niabella drilacis (strain DSM 25811 / CCM 8410 / CCUG 62505 / LMG 26954 / E90).